The following is a 320-amino-acid chain: MIKKIGVLTSGGDAPGMNAAVRGVVRAALSDGLEVYGIYDGYQGLHQNRIEKLSRTSVSDVINRGGTFLGSARFPEFKDEKVRAQAIQNLKMHGIEALVVIGGDGSYMGAKKLTEMGFPCIGIPGTIDNDVAGTDYTIGYFTALNTVIDAIDRLRDTSSSHQRISIVEVMGRHCGDLTLMSAIAGGCEYIITPETGLHKEELIAKIKEGIYKGKKHAIVALTELMTDANELAKYIEDETGRETRATVLGHIQRGGQPTAFDRILASRMGAYAVELLIQGEGGRCVGVQNEKMVHHDIIDAIENMKRPVRKDLYELADKLF.

Glycine 12 provides a ligand contact to ATP. ADP is bound at residue 22 to 26 (RGVVR). ATP is bound by residues 73–74 (RF) and 103–106 (GDGS). Aspartate 104 serves as a coordination point for Mg(2+). Residue 126 to 128 (TID) coordinates substrate. Aspartate 128 acts as the Proton acceptor in catalysis. Arginine 155 contacts ADP. Substrate is bound by residues arginine 163 and 170 to 172 (MGR). ADP contacts are provided by residues 186–188 (GCE), lysine 212, and 214–216 (KKH). Residues glutamate 223, arginine 244, and 250 to 253 (HIQR) contribute to the substrate site.

It belongs to the phosphofructokinase type A (PFKA) family. ATP-dependent PFK group I subfamily. Prokaryotic clade 'B1' sub-subfamily. In terms of assembly, homotetramer. Mg(2+) is required as a cofactor.

It is found in the cytoplasm. It carries out the reaction beta-D-fructose 6-phosphate + ATP = beta-D-fructose 1,6-bisphosphate + ADP + H(+). It functions in the pathway carbohydrate degradation; glycolysis; D-glyceraldehyde 3-phosphate and glycerone phosphate from D-glucose: step 3/4. With respect to regulation, allosterically activated by ADP and other diphosphonucleosides, and allosterically inhibited by phosphoenolpyruvate. Its function is as follows. Catalyzes the phosphorylation of D-fructose 6-phosphate to fructose 1,6-bisphosphate by ATP, the first committing step of glycolysis. This Photobacterium profundum (strain SS9) protein is ATP-dependent 6-phosphofructokinase.